The following is a 286-amino-acid chain: Pantothenate synthetase (286 aa).

30 to 37 (MGCFHQGH) is a binding site for ATP. The active-site Proton donor is His-37. Gln-61 contributes to the (R)-pantoate binding site. Residue Gln-61 coordinates beta-alanine. 147 to 150 (GEKD) is a binding site for ATP. (R)-pantoate is bound at residue Gln-153. 184–187 (MSSR) contacts ATP.

Belongs to the pantothenate synthetase family. As to quaternary structure, homodimer.

The protein resides in the cytoplasm. The enzyme catalyses (R)-pantoate + beta-alanine + ATP = (R)-pantothenate + AMP + diphosphate + H(+). Its pathway is cofactor biosynthesis; (R)-pantothenate biosynthesis; (R)-pantothenate from (R)-pantoate and beta-alanine: step 1/1. Its function is as follows. Catalyzes the condensation of pantoate with beta-alanine in an ATP-dependent reaction via a pantoyl-adenylate intermediate. This Desulfotalea psychrophila (strain LSv54 / DSM 12343) protein is Pantothenate synthetase.